The primary structure comprises 232 residues: Enolase-phosphatase E1 (232 aa).

Belongs to the HAD-like hydrolase superfamily. MasA/MtnC family. Monomer. The cofactor is Mg(2+).

It carries out the reaction 5-methylsulfanyl-2,3-dioxopentyl phosphate + H2O = 1,2-dihydroxy-5-(methylsulfanyl)pent-1-en-3-one + phosphate. The protein operates within amino-acid biosynthesis; L-methionine biosynthesis via salvage pathway; L-methionine from S-methyl-5-thio-alpha-D-ribose 1-phosphate: step 3/6. It participates in amino-acid biosynthesis; L-methionine biosynthesis via salvage pathway; L-methionine from S-methyl-5-thio-alpha-D-ribose 1-phosphate: step 4/6. In terms of biological role, bifunctional enzyme that catalyzes the enolization of 2,3-diketo-5-methylthiopentyl-1-phosphate (DK-MTP-1-P) into the intermediate 2-hydroxy-3-keto-5-methylthiopentenyl-1-phosphate (HK-MTPenyl-1-P), which is then dephosphorylated to form the acireductone 1,2-dihydroxy-3-keto-5-methylthiopentene (DHK-MTPene). The protein is Enolase-phosphatase E1 of Acidiphilium cryptum (strain JF-5).